Consider the following 348-residue polypeptide: Photosystem II protein D1 (348 aa).

3 helical membrane-spanning segments follow: residues 33 to 50 (YIGWFGILMFPLLVLATV), 122 to 137 (HFIFGAGAYMGREWEF), and 146 to 160 (WIFVAFSAPLVAASA). H122 contacts chlorophyll a. Y130 lines the pheophytin a pocket. D174 and E193 together coordinate [CaMn4O5] cluster. Residues 201–222 (FHILGVAAVFGGSLFSAMHGSL) form a helical membrane-spanning segment. A chlorophyll a-binding site is contributed by H202. A quinone-binding positions include H219 and 268 to 269 (SF). H219 contributes to the Fe cation binding site. H276 is a binding site for Fe cation. A helical membrane pass occupies residues 278–292 (FLAAWPVIGIWFTSL). [CaMn4O5] cluster is bound by residues H336, E337, D346, and A348.

The protein belongs to the reaction center PufL/M/PsbA/D family. In terms of assembly, PSII is composed of 1 copy each of membrane proteins PsbA, PsbB, PsbC, PsbD, PsbE, PsbF, PsbH, PsbI, PsbJ, PsbK, PsbL, PsbM, PsbT, PsbX, PsbY, PsbZ, Psb30/Ycf12, at least 3 peripheral proteins of the oxygen-evolving complex and a large number of cofactors. It forms dimeric complexes. The cofactor is The D1/D2 heterodimer binds P680, chlorophylls that are the primary electron donor of PSII, and subsequent electron acceptors. It shares a non-heme iron and each subunit binds pheophytin, quinone, additional chlorophylls, carotenoids and lipids. D1 provides most of the ligands for the Mn4-Ca-O5 cluster of the oxygen-evolving complex (OEC). There is also a Cl(-1) ion associated with D1 and D2, which is required for oxygen evolution. The PSII complex binds additional chlorophylls, carotenoids and specific lipids.. Tyr-165 forms a radical intermediate that is referred to as redox-active TyrZ, YZ or Y-Z.

The protein resides in the plastid. It is found in the chloroplast thylakoid membrane. It catalyses the reaction 2 a plastoquinone + 4 hnu + 2 H2O = 2 a plastoquinol + O2. Photosystem II (PSII) is a light-driven water:plastoquinone oxidoreductase that uses light energy to abstract electrons from H(2)O, generating O(2) and a proton gradient subsequently used for ATP formation. It consists of a core antenna complex that captures photons, and an electron transfer chain that converts photonic excitation into a charge separation. The D1/D2 (PsbA/PsbD) reaction center heterodimer binds P680, the primary electron donor of PSII as well as several subsequent electron acceptors. The chain is Photosystem II protein D1 from Heterocapsa triquetra (Dinoflagellate).